Here is a 153-residue protein sequence, read N- to C-terminus: UPF0756 membrane protein BCQ_4399 (153 aa).

4 helical membrane-spanning segments follow: residues 8–28, 54–74, 87–107, and 117–137; these read FLFI…TVAI, LGVT…EIGF, WIAL…VQLL, and LVFG…GPLI.

This sequence belongs to the UPF0756 family.

Its subcellular location is the cell membrane. This chain is UPF0756 membrane protein BCQ_4399, found in Bacillus cereus (strain Q1).